A 578-amino-acid polypeptide reads, in one-letter code: Membrane protein insertase YidC (578 aa).

A helical transmembrane segment spans residues 7-27; sequence FLAIAISLGILLGFQGLYRHF. Residues 35–70 form a disordered region; sequence ARTATNAGQGKPNNTLGAVPTDATASQSPPPKEGAR. Residues 37 to 50 show a composition bias toward polar residues; the sequence is TATNAGQGKPNNTL. 4 consecutive transmembrane segments (helical) span residues 362–382, 436–456, 491–511, and 530–550; these read LVGN…AAFY, LPML…FVTI, HISP…TMYL, and FMPI…VIYW.

Belongs to the OXA1/ALB3/YidC family. Type 1 subfamily. Interacts with the Sec translocase complex via SecD. Specifically interacts with transmembrane segments of nascent integral membrane proteins during membrane integration.

The protein localises to the cell inner membrane. Required for the insertion and/or proper folding and/or complex formation of integral membrane proteins into the membrane. Involved in integration of membrane proteins that insert both dependently and independently of the Sec translocase complex, as well as at least some lipoproteins. Aids folding of multispanning membrane proteins. In Granulibacter bethesdensis (strain ATCC BAA-1260 / CGDNIH1), this protein is Membrane protein insertase YidC.